A 64-amino-acid chain; its full sequence is Large ribosomal subunit protein bL35 (64 aa).

Belongs to the bacterial ribosomal protein bL35 family.

This Kineococcus radiotolerans (strain ATCC BAA-149 / DSM 14245 / SRS30216) protein is Large ribosomal subunit protein bL35.